The primary structure comprises 179 residues: uncharacterized protein (179 aa).

Residues 1 to 27 (MKTISKQLSAVIFPFIFSACVSQSASS) constitute a signal peptide (or 24).

This is an uncharacterized protein from Haemophilus influenzae (strain ATCC 51907 / DSM 11121 / KW20 / Rd).